Here is a 189-residue protein sequence, read N- to C-terminus: Chitin synthase 1 (189 aa).

The protein belongs to the chitin synthase family. Class I subfamily.

It is found in the cell membrane. It carries out the reaction [(1-&gt;4)-N-acetyl-beta-D-glucosaminyl](n) + UDP-N-acetyl-alpha-D-glucosamine = [(1-&gt;4)-N-acetyl-beta-D-glucosaminyl](n+1) + UDP + H(+). In terms of biological role, polymerizes chitin, a structural polymer of the cell wall and septum, by transferring the sugar moiety of UDP-GlcNAc to the non-reducing end of the growing chitin polymer. The polypeptide is Chitin synthase 1 (chs1) (Botryotinia fuckeliana (Noble rot fungus)).